Reading from the N-terminus, the 486-residue chain is Aspartyl/glutamyl-tRNA(Asn/Gln) amidotransferase subunit B (486 aa).

This sequence belongs to the GatB/GatE family. GatB subfamily. In terms of assembly, heterotrimer of A, B and C subunits.

It catalyses the reaction L-glutamyl-tRNA(Gln) + L-glutamine + ATP + H2O = L-glutaminyl-tRNA(Gln) + L-glutamate + ADP + phosphate + H(+). It carries out the reaction L-aspartyl-tRNA(Asn) + L-glutamine + ATP + H2O = L-asparaginyl-tRNA(Asn) + L-glutamate + ADP + phosphate + 2 H(+). Functionally, allows the formation of correctly charged Asn-tRNA(Asn) or Gln-tRNA(Gln) through the transamidation of misacylated Asp-tRNA(Asn) or Glu-tRNA(Gln) in organisms which lack either or both of asparaginyl-tRNA or glutaminyl-tRNA synthetases. The reaction takes place in the presence of glutamine and ATP through an activated phospho-Asp-tRNA(Asn) or phospho-Glu-tRNA(Gln). The polypeptide is Aspartyl/glutamyl-tRNA(Asn/Gln) amidotransferase subunit B (Leptospira borgpetersenii serovar Hardjo-bovis (strain JB197)).